The following is a 157-amino-acid chain: Endoribonuclease YbeY (157 aa).

The Zn(2+) site is built by histidine 114, histidine 118, and histidine 124.

Belongs to the endoribonuclease YbeY family. Zn(2+) is required as a cofactor.

Its subcellular location is the cytoplasm. Single strand-specific metallo-endoribonuclease involved in late-stage 70S ribosome quality control and in maturation of the 3' terminus of the 16S rRNA. The sequence is that of Endoribonuclease YbeY from Klebsiella pneumoniae (strain 342).